The following is a 343-amino-acid chain: Cytoplasmic tRNA 2-thiolation protein 1 (343 aa).

Belongs to the TtcA family. CTU1/NCS6/ATPBD3 subfamily.

The protein resides in the cytoplasm. It participates in tRNA modification; 5-methoxycarbonylmethyl-2-thiouridine-tRNA biosynthesis. Its function is as follows. Plays a central role in 2-thiolation of mcm(5)S(2)U at tRNA wobble positions of tRNA(Lys), tRNA(Glu) and tRNA(Gln). Directly binds tRNAs and probably acts by catalyzing adenylation of tRNAs, an intermediate required for 2-thiolation. It is unclear whether it acts as a sulfurtransferase that transfers sulfur from thiocarboxylated URM1 onto the uridine of tRNAs at wobble position. This is Cytoplasmic tRNA 2-thiolation protein 1 from Drosophila melanogaster (Fruit fly).